The primary structure comprises 236 residues: Dual specificity protein phosphatase 15 (236 aa).

Glycine 2 is lipidated: N-myristoyl glycine. Residues 4-144 (GMTKVLPGLY…LEEFGWANSQ (141 aa)) enclose the Tyrosine-protein phosphatase domain. Cysteine 88 acts as the Phosphocysteine intermediate in catalysis. Positions 178-213 (GPGTSAPSATTASSAASEGTLQRLVPRSPRESHRPL) are disordered. Residues 181 to 194 (TSAPSATTASSAAS) are compositionally biased toward low complexity.

It belongs to the protein-tyrosine phosphatase family. Non-receptor class dual specificity subfamily.

Its subcellular location is the cell membrane. It catalyses the reaction O-phospho-L-tyrosyl-[protein] + H2O = L-tyrosyl-[protein] + phosphate. It carries out the reaction O-phospho-L-seryl-[protein] + H2O = L-seryl-[protein] + phosphate. The enzyme catalyses O-phospho-L-threonyl-[protein] + H2O = L-threonyl-[protein] + phosphate. Its function is as follows. May play a role in the regulation of oligodendrocyte differentiation. May play a role in the regulation of myelin formation. Involved in the regulation of Erk1/2 phosphorylation in Schwann cells; the signaling may be linked to the regulation of myelination. May dephosphorylate MAPK13, ATF2, ERBB3, PDGFRB and SNX6. The protein is Dual specificity protein phosphatase 15 (Dusp15) of Rattus norvegicus (Rat).